Consider the following 223-residue polypeptide: Putative germin-like protein subfamily 1 member 12 (223 aa).

The signal sequence occupies residues 1-24; sequence MNMKNLYLAILYLLAASTLPFAIA. Cysteines 34 and 51 form a disulfide. The region spanning 65–216 is the Cupin type-1 domain; the sequence is SGLDKARTTE…AFQLDPKVII (152 aa). Asn-81 carries an N-linked (GlcNAc...) asparagine glycan. Positions 114, 116, and 121 each coordinate Mn(2+). Residue Asn-145 is glycosylated (N-linked (GlcNAc...) asparagine). A Mn(2+)-binding site is contributed by His-162.

The protein belongs to the germin family. Oligomer (believed to be a pentamer but probably hexamer).

The protein resides in the secreted. Its subcellular location is the extracellular space. The protein localises to the apoplast. May play a role in plant defense. Probably has no oxalate oxidase activity even if the active site is conserved. This Arabidopsis thaliana (Mouse-ear cress) protein is Putative germin-like protein subfamily 1 member 12.